Consider the following 922-residue polypeptide: Isoleucine--tRNA ligase (922 aa).

A 'HIGH' region motif is present at residues 57–67; it reads PYANGDIHMGH. E553 contributes to the L-isoleucyl-5'-AMP binding site. The 'KMSKS' region signature appears at 594–598; sequence KMSKS. K597 lines the ATP pocket. C889, C892, C909, and C912 together coordinate Zn(2+).

Belongs to the class-I aminoacyl-tRNA synthetase family. IleS type 1 subfamily. In terms of assembly, monomer. Requires Zn(2+) as cofactor.

The protein resides in the cytoplasm. The catalysed reaction is tRNA(Ile) + L-isoleucine + ATP = L-isoleucyl-tRNA(Ile) + AMP + diphosphate. Functionally, catalyzes the attachment of isoleucine to tRNA(Ile). As IleRS can inadvertently accommodate and process structurally similar amino acids such as valine, to avoid such errors it has two additional distinct tRNA(Ile)-dependent editing activities. One activity is designated as 'pretransfer' editing and involves the hydrolysis of activated Val-AMP. The other activity is designated 'posttransfer' editing and involves deacylation of mischarged Val-tRNA(Ile). This is Isoleucine--tRNA ligase from Bacillus licheniformis (strain ATCC 14580 / DSM 13 / JCM 2505 / CCUG 7422 / NBRC 12200 / NCIMB 9375 / NCTC 10341 / NRRL NRS-1264 / Gibson 46).